A 346-amino-acid polypeptide reads, in one-letter code: Coproporphyrin III ferrochelatase (346 aa).

Residues S52 and Y121 each contribute to the Fe-coproporphyrin III site. Fe(2+) contacts are provided by H181 and E264.

It belongs to the ferrochelatase family.

The protein localises to the cytoplasm. The enzyme catalyses Fe-coproporphyrin III + 2 H(+) = coproporphyrin III + Fe(2+). Its pathway is porphyrin-containing compound metabolism; protoheme biosynthesis. Functionally, involved in coproporphyrin-dependent heme b biosynthesis. Catalyzes the insertion of ferrous iron into coproporphyrin III to form Fe-coproporphyrin III. This Mycobacterium sp. (strain JLS) protein is Coproporphyrin III ferrochelatase.